Reading from the N-terminus, the 562-residue chain is Nucleoprotein (562 aa).

The binding site for the cap structure m7GTP stretch occupies residues 54-237 (LRKTKRTDGD…ITKDESAINI (184 aa)). Mn(2+) is bound by residues aspartate 381 and glutamate 383. The Zn(2+) site is built by glutamate 391, cysteine 498, histidine 501, and cysteine 523. Aspartate 527 serves as a coordination point for Mn(2+).

This sequence belongs to the arenaviridae nucleocapsid protein family. In terms of assembly, homomultimerizes to form the nucleocapsid. Binds to viral genomic RNA. Interacts with glycoprotein G2. Interacts with protein Z; this interaction probably directs the encapsidated genome to budding sites. Interacts with protein L; this interaction does not interfere with Z-L interaction. Interacts with host IKBKE (via Protein kinase domain); the interaction inhibits IKBKE kinase activity.

It is found in the virion. It localises to the host cytoplasm. Its function is as follows. Encapsidates the genome, protecting it from nucleases. The encapsidated genomic RNA is termed the nucleocapsid (NC). Serves as template for viral transcription and replication. The increased presence of protein N in host cell does not seem to trigger the switch from transcription to replication as observed in other negative strain RNA viruses. Through the interaction with host IKBKE, strongly inhibits the phosphorylation and nuclear translocation of host IRF3, a protein involved in interferon activation pathway, leading to the inhibition of interferon-beta and IRF3-dependent promoters activation. Also encodes a functional 3'-5' exoribonuclease that degrades preferentially dsRNA substrates and thereby participates in the suppression of interferon induction. This chain is Nucleoprotein, found in Homo sapiens (Human).